The primary structure comprises 295 residues: Ribosomal RNA small subunit methyltransferase A (295 aa).

6 residues coordinate S-adenosyl-L-methionine: Asn-25, Leu-27, Gly-52, Glu-73, Asp-98, and Asn-120.

This sequence belongs to the class I-like SAM-binding methyltransferase superfamily. rRNA adenine N(6)-methyltransferase family. RsmA subfamily.

It localises to the cytoplasm. The catalysed reaction is adenosine(1518)/adenosine(1519) in 16S rRNA + 4 S-adenosyl-L-methionine = N(6)-dimethyladenosine(1518)/N(6)-dimethyladenosine(1519) in 16S rRNA + 4 S-adenosyl-L-homocysteine + 4 H(+). Its function is as follows. Specifically dimethylates two adjacent adenosines (A1518 and A1519) in the loop of a conserved hairpin near the 3'-end of 16S rRNA in the 30S particle. May play a critical role in biogenesis of 30S subunits. In Desulfotalea psychrophila (strain LSv54 / DSM 12343), this protein is Ribosomal RNA small subunit methyltransferase A.